A 32-amino-acid chain; its full sequence is DAPSTTPPQDXEKKAAEFQKTFTEQXNQLANK.

The tract at residues 1–32 (DAPSTTPPQDXEKKAAEFQKTFTEQXNQLANK) is disordered. The span at 20–32 (KTFTEQXNQLANK) shows a compositional bias: polar residues.

Belongs to the insect apolipophorin-3 family. In terms of assembly, equilibrium between a soluble monomer and a bound lipoprotein form. Apolipophorin-3 associates with lipophorin during lipid loading until each particle contains 9 or 14 molecules of apolipophorin-3. As to expression, hemolymph.

It localises to the secreted. Its function is as follows. Assists in the loading of diacylglycerol, generated from triacylglycerol stores in the fat body through the action of adipokinetic hormone, into lipophorin, the hemolymph lipoprotein. It increases the lipid carrying capacity of lipophorin by covering the expanding hydrophobic surface resulting from diacylglycerol uptake. It thus plays a critical role in the transport of lipids during flight in several species of insects. The sequence is that of Apolipophorin-3 from Diatraea grandiosella (Southwestern corn borer).